The chain runs to 137 residues: uncharacterized protein (137 aa).

Residues 75 to 91 traverse the membrane as a helical segment; sequence MFLDAMVILAVASGVSL. A disordered region spans residues 93–116; sequence PQLPGRRSHNASTPGAKKPGKDHG.

It is found in the membrane. This is an uncharacterized protein from Saccharomyces cerevisiae (strain ATCC 204508 / S288c) (Baker's yeast).